The following is a 145-amino-acid chain: D-aminoacyl-tRNA deacylase (145 aa).

The short motif at 137–138 is the Gly-cisPro motif, important for rejection of L-amino acids element; the sequence is GP.

It belongs to the DTD family. Homodimer.

It localises to the cytoplasm. It carries out the reaction glycyl-tRNA(Ala) + H2O = tRNA(Ala) + glycine + H(+). The enzyme catalyses a D-aminoacyl-tRNA + H2O = a tRNA + a D-alpha-amino acid + H(+). An aminoacyl-tRNA editing enzyme that deacylates mischarged D-aminoacyl-tRNAs. Also deacylates mischarged glycyl-tRNA(Ala), protecting cells against glycine mischarging by AlaRS. Acts via tRNA-based rather than protein-based catalysis; rejects L-amino acids rather than detecting D-amino acids in the active site. By recycling D-aminoacyl-tRNA to D-amino acids and free tRNA molecules, this enzyme counteracts the toxicity associated with the formation of D-aminoacyl-tRNA entities in vivo and helps enforce protein L-homochirality. In Carboxydothermus hydrogenoformans (strain ATCC BAA-161 / DSM 6008 / Z-2901), this protein is D-aminoacyl-tRNA deacylase.